Consider the following 797-residue polypeptide: N-acetylneuraminate (7)9-O-acetyltransferase (797 aa).

Topologically, residues 1–18 (MAALAYNLGKREINHYFS) are cytoplasmic. A helical transmembrane segment spans residues 19-39 (VRSAKVLALVAVLLLAACHLA). Topologically, residues 40 to 313 (SRRYRGNDSC…QPRPPVTLIQ (274 aa)) are lumenal. An N-linked (GlcNAc...) asparagine glycan is attached at asparagine 46. The active-site Acyl-ester intermediate is the serine 94. Residues asparagine 175 and asparagine 187 are each glycosylated (N-linked (GlcNAc...) asparagine). Residues aspartate 270 and histidine 273 contribute to the active site. A helical transmembrane segment spans residues 314 to 334 (KLAACFFTLSIIGYLIFYIIH). The Cytoplasmic segment spans residues 335-363 (RNAHRKNKPCTDLESGEEKKNIINTPVSS). A helical membrane pass occupies residues 364–384 (LEILLQSFCKLGLIMAYFYMC). At 385–395 (DRANLFMKENK) the chain is on the lumenal side. The chain crosses the membrane as a helical span at residues 396–416 (FYTHSSFFIPIIYILVLGVFY). At 417–439 (NENTKETKVLNREQTDEWKGWMQ) the chain is on the cytoplasmic side. A helical transmembrane segment spans residues 440–460 (LVILIYHISGASTFLPVYMHI). Position 461 (arginine 461) is a topological domain, lumenal. Residues 462 to 482 (VLVAAYLFQTGYGHFSYFWIK) traverse the membrane as a helical segment. At 483–486 (GDFG) the chain is on the cytoplasmic side. A helical membrane pass occupies residues 487-507 (IYRVCQVLFRLNFLVVVLCIV). Residues 508 to 513 (MDRPYQ) are Lumenal-facing. A helical membrane pass occupies residues 514 to 534 (FYYFVPLVTVWFMVIYVTLAL). At 535–547 (WPQIIQKKANGNC) the chain is on the cytoplasmic side. Residues 548–568 (FWHFGLLLKLGFLLLFICFLA) traverse the membrane as a helical segment. Residues 569–605 (YSQGAFEKIFSLWPLSKCFELKGNVYEWWFRWRLDRY) are Lumenal-facing. A helical membrane pass occupies residues 606-626 (VVFHGMLFAFIYLALQKRQIL). Residues 627 to 638 (SEGKGEPLFSNK) are Cytoplasmic-facing. A helical transmembrane segment spans residues 639–659 (ISNFLLFISVVSFLTYSIWAS). Residues 660–671 (SCKNKAECNELH) lie on the Lumenal side of the membrane. Residues 672 to 692 (PSVSVVQILAFILIRNIPGYA) form a helical membrane-spanning segment. The Cytoplasmic portion of the chain corresponds to 693–698 (RSVYSS). A helical transmembrane segment spans residues 699–719 (FFAWFGKISLELFICQYHIWL). The Lumenal segment spans residues 720–725 (AADTRG). Residues 726–746 (ILVLIPGNPMLNIIVSTFIFV) form a helical membrane-spanning segment. The Cytoplasmic segment spans residues 747–770 (CVAHEISQITNDLAQIIIPKDNSS). A helical membrane pass occupies residues 771–791 (LLKRLACIAAFFCGLLILSSI). The Lumenal segment spans residues 792–797 (QDKSKH).

The protein belongs to the PC-esterase family. CASD1 subfamily. N-glycosylated. In terms of tissue distribution, highly expressed in peripheral B lymphocytes.

It localises to the golgi apparatus membrane. It carries out the reaction CMP-N-acetyl-beta-neuraminate + acetyl-CoA = CMP-N-acetyl-9-O-acetyl-beta-neuraminate + CoA. It catalyses the reaction a ganglioside GD3 (d18:1(4E)) + acetyl-CoA = a ganglioside Ac-O-7-GD3(d18:1(4E)) + CoA. The catalysed reaction is CMP-N-acetyl-beta-neuraminate + acetyl-CoA = CMP-N-acetyl-7-O-acetyl-beta-neuraminate + CoA. Key enzyme in the biosynthesis of O-acetylated (O-Ac) sialoglycans such as gangliosides O-AcGD3 and O-AcGD2, which affect various processes such as cell-cell interactions, host-pathogen recognition. Catalyzes the transfer of an acetyl group from a donor, the acetyl-coenzyme-A molecule (acetyl-CoA), to the C7/8/9 OH-position of a sialic acid residue. The primary site of O-acetyl group transfer on sialic acid seems to depend on cell type and can be C7, from which the O-acetyl group could subsequently migrate to the C8 and then to the C9 position, or at C9 with possibility of migrating to the C8 and then to the C7 position. Together with ST8SIA1 (GD3 synthase) it increases the levels of ganglioside Ac-O-7-GD3. Can transfer the acetyl group from acetyl-CoA to free sialate (N-acetylneuraminate, Neu5Ac) in vitro, but has preferred substrate specificity for CMP-activated sialate (CMP-Neu5Ac), resulting in the formation of 9-O-acetylated CMP-Neu5Ac (CMP-Neu5,9Ac2). CMP-Neu5,9Ac2 may be used by sialyltransferases as a sialate donor for glycoconjugate acceptors such as ganglioside GD3. O-acetylation at position C9 of ganglioside GD3 can counteract the pro-apoptotic effects of the ganglioside GD3 in tumor cells. This chain is N-acetylneuraminate (7)9-O-acetyltransferase, found in Homo sapiens (Human).